We begin with the raw amino-acid sequence, 556 residues long: Urocanate hydratase (556 aa).

Residues 52–53 (GG), Q130, 176–178 (GMG), E196, R201, 242–243 (NA), 263–267 (QTSAH), 273–274 (YL), and Y322 contribute to the NAD(+) site. Residue C410 is part of the active site. G492 is an NAD(+) binding site.

The protein belongs to the urocanase family. The cofactor is NAD(+).

The protein localises to the cytoplasm. The catalysed reaction is 4-imidazolone-5-propanoate = trans-urocanate + H2O. It participates in amino-acid degradation; L-histidine degradation into L-glutamate; N-formimidoyl-L-glutamate from L-histidine: step 2/3. Catalyzes the conversion of urocanate to 4-imidazolone-5-propionate. This chain is Urocanate hydratase, found in Bradyrhizobium sp. (strain BTAi1 / ATCC BAA-1182).